A 396-amino-acid chain; its full sequence is Tryptophan synthase beta chain (396 aa).

Lys88 carries the N6-(pyridoxal phosphate)lysine modification.

Belongs to the TrpB family. Tetramer of two alpha and two beta chains. The cofactor is pyridoxal 5'-phosphate.

The enzyme catalyses (1S,2R)-1-C-(indol-3-yl)glycerol 3-phosphate + L-serine = D-glyceraldehyde 3-phosphate + L-tryptophan + H2O. The protein operates within amino-acid biosynthesis; L-tryptophan biosynthesis; L-tryptophan from chorismate: step 5/5. The beta subunit is responsible for the synthesis of L-tryptophan from indole and L-serine. In Shewanella putrefaciens (strain CN-32 / ATCC BAA-453), this protein is Tryptophan synthase beta chain.